Consider the following 233-residue polypeptide: NAD(P)H-hydrate epimerase (233 aa).

The YjeF N-terminal domain occupies Ala-10–Leu-217. Asn-60–Asp-64 is a (6S)-NADPHX binding site. K(+) is bound by residues Asn-61 and Asp-125. (6S)-NADPHX is bound by residues Gly-129–Pro-135 and Asp-158. Ser-161 provides a ligand contact to K(+).

This sequence belongs to the NnrE/AIBP family. Requires K(+) as cofactor.

The catalysed reaction is (6R)-NADHX = (6S)-NADHX. It carries out the reaction (6R)-NADPHX = (6S)-NADPHX. In terms of biological role, catalyzes the epimerization of the S- and R-forms of NAD(P)HX, a damaged form of NAD(P)H that is a result of enzymatic or heat-dependent hydration. This is a prerequisite for the S-specific NAD(P)H-hydrate dehydratase to allow the repair of both epimers of NAD(P)HX. This Drosophila grimshawi (Hawaiian fruit fly) protein is NAD(P)H-hydrate epimerase.